The chain runs to 717 residues: Eukaryotic translation initiation factor 3 subunit B (717 aa).

Residues 1–89 (MTVEDNLDID…VFIEYETGEM (89 aa)) are sufficient for interaction with HCR1 and TIF32. Residues 1-216 (MTVEDNLDID…GVQLWGGPDW (216 aa)) are sufficient for interaction with PIC8. Residues 28–115 (SFIVVDGAPV…HKLLVNKLSE (88 aa)) form the RRM domain. WD repeat units lie at residues 183–221 (RERWTETQVYWSPTGTYLVSTHTQGVQLWGGPDWAPPIC), 223–284 (FQHP…PVRT), 293–332 (GASMSWPILKFSPDDKYAARMIPGEQLSIYETETMSLLDK), 445–484 (ELKDTVTNMAWEPHGDRFVTISNSDSTTNYDGPLPANRHT), 506–549 (FDKK…DRKH), and 564–609 (SEHY…QREE).

This sequence belongs to the eIF-3 subunit B family. As to quaternary structure, component of the eukaryotic translation initiation factor 3 (eIF-3) complex.

Its subcellular location is the cytoplasm. Its function is as follows. RNA-binding component of the eukaryotic translation initiation factor 3 (eIF-3) complex, which is involved in protein synthesis of a specialized repertoire of mRNAs and, together with other initiation factors, stimulates binding of mRNA and methionyl-tRNAi to the 40S ribosome. The eIF-3 complex specifically targets and initiates translation of a subset of mRNAs involved in cell proliferation. The polypeptide is Eukaryotic translation initiation factor 3 subunit B (Yarrowia lipolytica (strain CLIB 122 / E 150) (Yeast)).